The primary structure comprises 629 residues: Bifunctional protein ArgHA (629 aa).

The interval 1–499 is argininosuccinate lyase; the sequence is MALWGGRFSQ…NLPRSRSDLV (499 aa). In terms of domain architecture, N-acetyltransferase spans 464 to 598; it reads ISIRAARLTD…EKVLKDCDMC (135 aa). An amino-acid acetyltransferase region spans residues 500-629; that stretch reads KAVGTFAVTE…INLKAEKLAS (130 aa).

The protein in the N-terminal section; belongs to the lyase 1 family. Argininosuccinate lyase subfamily. This sequence in the C-terminal section; belongs to the acetyltransferase family. ArgA subfamily.

The protein localises to the cytoplasm. The catalysed reaction is 2-(N(omega)-L-arginino)succinate = fumarate + L-arginine. It catalyses the reaction L-glutamate + acetyl-CoA = N-acetyl-L-glutamate + CoA + H(+). Its pathway is amino-acid biosynthesis; L-arginine biosynthesis; N(2)-acetyl-L-ornithine from L-glutamate: step 1/4. The protein operates within amino-acid biosynthesis; L-arginine biosynthesis; L-arginine from L-ornithine and carbamoyl phosphate: step 3/3. This is Bifunctional protein ArgHA (argHA) from Moritella abyssi.